A 417-amino-acid chain; its full sequence is Mitochondrial inner membrane i-AAA protease supercomplex subunit MGR1 (417 aa).

A disordered region spans residues 1-28; it reads MAVFTPPSGNSNSTDHTHTQDDHDKDDN. Over 1–56 the chain is Mitochondrial intermembrane; the sequence is MAVFTPPSGNSNSTDHTHTQDDHDKDDNDIKKFYIRPSLGLKLWGPLVPAPDNLPG. A compositionally biased stretch (basic and acidic residues) spans 15–28; sequence DHTHTQDDHDKDDN. A helical transmembrane segment spans residues 57 to 73; it reads LYTLITIQSAVGFFALW. The Mitochondrial matrix portion of the chain corresponds to 74-151; the sequence is RLRRLYKLPP…RQSRFVSVRK (78 aa). A helical membrane pass occupies residues 152 to 169; sequence LLWGLFGSLLLSQSLLEL. Residues 170 to 417 are Mitochondrial intermembrane-facing; sequence TRLNFLKYDP…PKALTNEKTH (248 aa). Over residues 391-401 the composition is skewed to polar residues; the sequence is SHTKTPTSTDQ. The interval 391–417 is disordered; sequence SHTKTPTSTDQPLPGPTPKALTNEKTH.

Belongs to the MGR1 family. Component of the mitochondrial inner membrane i-AAA protease supercomplex composed of MGR1, MGR3 and YME1. With MGR3, forms a subcomplex that binds to YME1 and to substrates to facilitate proteolysis. Interacts directly with YME1.

Its subcellular location is the mitochondrion inner membrane. Component of the mitochondrial inner membrane i-AAA protease supercomplex required for mitochondrial inner membrane protein turnover. Together with MGR3, functions in an adapter complex that targets substrates to the i-AAA protease for degradation. Required for growth of cells lacking the mitochondrial genome. The polypeptide is Mitochondrial inner membrane i-AAA protease supercomplex subunit MGR1 (MGR1) (Saccharomyces cerevisiae (strain ATCC 204508 / S288c) (Baker's yeast)).